Consider the following 276-residue polypeptide: Large ribosomal subunit protein uL2 (276 aa).

Residues 223–276 (GVAMNPVDHPHGGGEGRGKGHHPTSPWGLPTKGYKTRRGKRPSDKFIVRRRNEV) are disordered. Basic and acidic residues-rich tracts occupy residues 230–240 (DHPHGGGEGRG) and 263–276 (RPSD…RNEV).

The protein belongs to the universal ribosomal protein uL2 family. As to quaternary structure, part of the 50S ribosomal subunit. Forms a bridge to the 30S subunit in the 70S ribosome.

One of the primary rRNA binding proteins. Required for association of the 30S and 50S subunits to form the 70S ribosome, for tRNA binding and peptide bond formation. It has been suggested to have peptidyltransferase activity; this is somewhat controversial. Makes several contacts with the 16S rRNA in the 70S ribosome. The sequence is that of Large ribosomal subunit protein uL2 from Thermotoga maritima (strain ATCC 43589 / DSM 3109 / JCM 10099 / NBRC 100826 / MSB8).